The sequence spans 389 residues: Probable serine/threonine-protein kinase PBL11 (389 aa).

Gly2 carries N-myristoyl glycine lipidation. Cys4 is lipidated: S-palmitoyl cysteine. One can recognise a Protein kinase domain in the interval 68-353 (FRPDSVVGEG…NEIVKTMEEL (286 aa)). Residues 74-82 (VGEGGFGCV) and Lys106 each bind ATP. The residue at position 151 (Tyr151) is a Phosphotyrosine. The Proton acceptor role is filled by Asp203. A phosphoserine mark is found at Ser207 and Ser237. Phosphothreonine occurs at positions 238 and 243. Phosphotyrosine is present on Tyr251.

This sequence belongs to the protein kinase superfamily. Ser/Thr protein kinase family. As to expression, roots, leaves and stems.

Its subcellular location is the cell membrane. It catalyses the reaction L-seryl-[protein] + ATP = O-phospho-L-seryl-[protein] + ADP + H(+). It carries out the reaction L-threonyl-[protein] + ATP = O-phospho-L-threonyl-[protein] + ADP + H(+). Functionally, may play a role in the regulation of plant growth and development. May be involved in plant defense signaling. The chain is Probable serine/threonine-protein kinase PBL11 from Arabidopsis thaliana (Mouse-ear cress).